A 432-amino-acid polypeptide reads, in one-letter code: Trigger factor (432 aa).

Residues 162-247 form the PPIase FKBP-type domain; that stretch reads GDLVKFDYQG…VKEVQAPVLP (86 aa).

The protein belongs to the FKBP-type PPIase family. Tig subfamily.

It is found in the cytoplasm. It catalyses the reaction [protein]-peptidylproline (omega=180) = [protein]-peptidylproline (omega=0). Its function is as follows. Involved in protein export. Acts as a chaperone by maintaining the newly synthesized protein in an open conformation. Functions as a peptidyl-prolyl cis-trans isomerase. In Thiobacillus denitrificans (strain ATCC 25259 / T1), this protein is Trigger factor.